The chain runs to 268 residues: Gasdermin bGSDM (268 aa).

Residue C3 is the site of S-palmitoyl cysteine attachment. Transmembrane regions (beta stranded) follow at residues I78 to I94, A103 to E121, K168 to V185, and A195 to F211. Residues G248 to T268 form a C-terminal region region.

Belongs to the bacterial gasdermin family. As to quaternary structure, monomer in solution. Forms large, homooligomeric ring-shaped pores when inserted in membranes. Cleavage by the adjacently encoded protease (G563DRAFT_02009) between Leu-247 and Gly-248 relieves autoinhibition, releasing the N-terminus which initiates loss of cell integrity. Post-translationally, palmitoylation helps stabilize the inactive state; may self-palmitoylate. Palmitoylation is not required for permeabilization of liposomes by the ring-like pores in vitro. Palmitoylation plays a significant role in pore formation.

The protein resides in the cytoplasm. It localises to the cell inner membrane. The full-length protein before cleavage is inactive: intramolecular interactions between the N-terminal domain and the C-terminal region, as well as the lipid modification, mediate autoinhibition. The pyroptosis-like-inducing activity is carried by the released N-terminal domain (gasdermin bGSDM, N-terminus). Its function is as follows. Precursor of a pore-forming protein involved in defense against bacteriophages. Cleavage of this precursor by its dedicated, neighboring protease (G563DRAFT_02009) releases the active moiety (gasdermin bGSDM, N-terminus) which inserts into membranes, forming pores and triggering cell death. Expression of bGSDM and its protease is highly toxic in E.coli. Cells expressing the gene pair stop dividing and lose membrane integrity. Both proteins are required to kill E.coli. In terms of biological role, pore-forming protein that causes membrane permeabilization via a pyroptosis-like activity. Makes ring-like pores with walls about 50 Angstroms thick and an interior pore diameter of 200-300 Angstroms, when integrated in liposomes. The protein is Gasdermin bGSDM of Runella zeae (strain ATCC BAA-293 / DSM 19591 / LMG 21438 / NS12).